Here is a 147-residue protein sequence, read N- to C-terminus: Myoglobin (147 aa).

Positions Ala2–Lys141 constitute a Globin domain. His60 provides a ligand contact to nitrite. His60 is an O2 binding site. A heme b-binding site is contributed by His89.

It belongs to the globin family. Monomeric.

Its subcellular location is the cytoplasm. It localises to the sarcoplasm. The enzyme catalyses Fe(III)-heme b-[protein] + nitric oxide + H2O = Fe(II)-heme b-[protein] + nitrite + 2 H(+). It carries out the reaction H2O2 + AH2 = A + 2 H2O. Its function is as follows. Monomeric heme protein which primary function is to store oxygen and facilitate its diffusion within muscle tissues. Reversibly binds oxygen through a pentacoordinated heme iron and enables its timely and efficient release as needed during periods of heightened demand. Depending on the oxidative conditions of tissues and cells, and in addition to its ability to bind oxygen, it also has a nitrite reductase activity whereby it regulates the production of bioactive nitric oxide. Under stress conditions, like hypoxia and anoxia, it also protects cells against reactive oxygen species thanks to its pseudoperoxidase activity. The polypeptide is Myoglobin (mb) (Thunnus obesus (Bigeye tuna)).